The sequence spans 496 residues: Geranylhydroquinone 3''-hydroxylase CYP76B74 (496 aa).

Residues 3-23 (YTTILVGFLIGFVLFKALTRK) traverse the membrane as a helical segment. C436 provides a ligand contact to heme.

Belongs to the cytochrome P450 family. Requires heme as cofactor.

The protein resides in the endoplasmic reticulum membrane. It catalyses the reaction (2E)-geranylhydroquinone + reduced [NADPH--hemoprotein reductase] + O2 = (2Z)-3''-hydroxygeranylhydroquinone + oxidized [NADPH--hemoprotein reductase] + H2O + H(+). Hydroxylase involved in the biosynthesis pathway of the red naphthoquinone pigment shikonin. Catalyzes the key step C-3''-hydroxylation of the prenylated phenolic intermediate geranylhydroquinone to form 3''-hydroxygeranylhydroquinone. The sequence is that of Geranylhydroquinone 3''-hydroxylase CYP76B74 from Arnebia euchroma (Pink arnebia).